A 292-amino-acid chain; its full sequence is tRNA pseudouridine synthase B (292 aa).

The active-site Nucleophile is the Asp-40.

Belongs to the pseudouridine synthase TruB family. Type 1 subfamily.

The enzyme catalyses uridine(55) in tRNA = pseudouridine(55) in tRNA. Its function is as follows. Responsible for synthesis of pseudouridine from uracil-55 in the psi GC loop of transfer RNAs. This is tRNA pseudouridine synthase B from Mycoplasma capricolum subsp. capricolum (strain California kid / ATCC 27343 / NCTC 10154).